The sequence spans 371 residues: tRNA-specific 2-thiouridylase MnmA (371 aa).

ATP is bound by residues 13 to 20 (GMSGGVDS) and Met39. The interaction with target base in tRNA stretch occupies residues 99-101 (NPD). Cys104 acts as the Nucleophile in catalysis. A disulfide bridge connects residues Cys104 and Cys200. ATP is bound at residue Gly128. The tract at residues 150–152 (KDQ) is interaction with tRNA. Cys200 functions as the Cysteine persulfide intermediate in the catalytic mechanism. The tract at residues 308-309 (RY) is interaction with tRNA.

Belongs to the MnmA/TRMU family.

It is found in the cytoplasm. The enzyme catalyses S-sulfanyl-L-cysteinyl-[protein] + uridine(34) in tRNA + AH2 + ATP = 2-thiouridine(34) in tRNA + L-cysteinyl-[protein] + A + AMP + diphosphate + H(+). Functionally, catalyzes the 2-thiolation of uridine at the wobble position (U34) of tRNA, leading to the formation of s(2)U34. This Listeria monocytogenes serotype 4a (strain HCC23) protein is tRNA-specific 2-thiouridylase MnmA.